A 503-amino-acid polypeptide reads, in one-letter code: ATP synthase subunit alpha (503 aa).

171–178 (DRQTGKTA) is an ATP binding site.

Belongs to the ATPase alpha/beta chains family. In terms of assembly, F-type ATPases have 2 components, CF(1) - the catalytic core - and CF(0) - the membrane proton channel. CF(1) has five subunits: alpha(3), beta(3), gamma(1), delta(1), epsilon(1). CF(0) has four main subunits: a(1), b(1), b'(1) and c(9-12).

It localises to the cellular thylakoid membrane. The enzyme catalyses ATP + H2O + 4 H(+)(in) = ADP + phosphate + 5 H(+)(out). Produces ATP from ADP in the presence of a proton gradient across the membrane. The alpha chain is a regulatory subunit. This Synechococcus sp. (strain PCC 6716) protein is ATP synthase subunit alpha.